The sequence spans 365 residues: MSTIIVKTPVTVGLQELFREHKLSKKSVVLFDSNTRKLFGDVVLEALRAEGFQLVELVIPAREASKSFSVAYRLYGQMIEADVDRSWNLLAVGGGVVGDLGGFIAASYFRGIPVIQMPTTLLAMTDSAIGGKVAINHPLGKNLIGFFHLPELVLIDPATLASLPRREIYAGLAEVVKYGFIADANFFDMLEAHFSEVATLQEPYLTEAVKTSALIKQDVVTRDFRELDGLRATLNFGHTFAHGLEKLADYRHLRHGEAVTMGLVCALYLSHRLGFLDAPSLERGLRLLQQFVFPKNVVERYFLASNSALLLESMFSDKKKLDKKLRFVLLKELGQAFLFEESVEDSEVLAAIESAKECFRQWQQK.

NAD(+)-binding positions include 95 to 99, 119 to 120, lysine 132, and lysine 141; these read GVVGD and TT. Positions 174, 238, and 255 each coordinate Zn(2+).

This sequence belongs to the sugar phosphate cyclases superfamily. Dehydroquinate synthase family. It depends on Co(2+) as a cofactor. The cofactor is Zn(2+). NAD(+) serves as cofactor.

Its subcellular location is the cytoplasm. The enzyme catalyses 7-phospho-2-dehydro-3-deoxy-D-arabino-heptonate = 3-dehydroquinate + phosphate. The protein operates within metabolic intermediate biosynthesis; chorismate biosynthesis; chorismate from D-erythrose 4-phosphate and phosphoenolpyruvate: step 2/7. Functionally, catalyzes the conversion of 3-deoxy-D-arabino-heptulosonate 7-phosphate (DAHP) to dehydroquinate (DHQ). This chain is 3-dehydroquinate synthase, found in Chlorobium chlorochromatii (strain CaD3).